A 136-amino-acid polypeptide reads, in one-letter code: Nucleoside diphosphate kinase (136 aa).

ATP is bound by residues Lys-10, Phe-58, Arg-86, Thr-92, Arg-104, and Asn-114. His-117 serves as the catalytic Pros-phosphohistidine intermediate.

This sequence belongs to the NDK family. As to quaternary structure, homotetramer. It depends on Mg(2+) as a cofactor.

The protein localises to the cytoplasm. The catalysed reaction is a 2'-deoxyribonucleoside 5'-diphosphate + ATP = a 2'-deoxyribonucleoside 5'-triphosphate + ADP. It catalyses the reaction a ribonucleoside 5'-diphosphate + ATP = a ribonucleoside 5'-triphosphate + ADP. Major role in the synthesis of nucleoside triphosphates other than ATP. The ATP gamma phosphate is transferred to the NDP beta phosphate via a ping-pong mechanism, using a phosphorylated active-site intermediate. This is Nucleoside diphosphate kinase from Mycobacteroides abscessus (strain ATCC 19977 / DSM 44196 / CCUG 20993 / CIP 104536 / JCM 13569 / NCTC 13031 / TMC 1543 / L948) (Mycobacterium abscessus).